The chain runs to 512 residues: Glutathione-binding protein GsiB (512 aa).

The signal sequence occupies residues 1–26; that stretch reads MTQFITHKWLAALGLASSIAAFPALA.

The protein belongs to the bacterial solute-binding protein 5 family. In terms of assembly, the complex is composed of two ATP-binding proteins (GsiA), two transmembrane proteins (GsiC and GsiD) and a solute-binding protein (GsiB).

It localises to the periplasm. Part of the ABC transporter complex GsiABCD involved in glutathione import. Binds glutathione. This is Glutathione-binding protein GsiB from Salmonella typhi.